A 589-amino-acid chain; its full sequence is 5'-AMP-activated protein kinase catalytic subunit alpha-1 (589 aa).

The region spanning 24 to 276 is the Protein kinase domain; that stretch reads FVIKETIGKG…VKRIVNHSWF (253 aa). Residues 30-38 and Lys53 each bind ATP; that span reads IGKGAFGAV. Asp147 acts as the Proton acceptor in catalysis.

It belongs to the protein kinase superfamily. CAMK Ser/Thr protein kinase family. SNF1 subfamily.

It catalyses the reaction L-seryl-[protein] + ATP = O-phospho-L-seryl-[protein] + ADP + H(+). It carries out the reaction L-threonyl-[protein] + ATP = O-phospho-L-threonyl-[protein] + ADP + H(+). Functionally, probably does not act as a sensor that couples lifespan to information about energy levels and insulin-like signals. Together with aak-2, involved in the establishment of germline stem cell (GSC) quiescence during dauer development. Plays a role in the maintenance of glycogen stores which are necessary for resistance to hyperosmotic stress. In Caenorhabditis elegans, this protein is 5'-AMP-activated protein kinase catalytic subunit alpha-1 (aak-1).